The following is a 390-amino-acid chain: Na(+)/H(+) antiporter NhaA (390 aa).

11 helical membrane passes run 13–33, 61–81, 99–119, 129–149, 158–178, 181–201, 209–229, 259–279, 297–317, 330–350, and 367–387; these read FQLE…ALVI, LSVH…FVTL, LLPI…YVFI, GWAI…SLLG, VFLT…IAFF, GDLS…LLTL, FIPY…SGIH, AISP…NAGV, ILLG…FIAV, WLSL…SLFV, and IGVL…LLYA.

This sequence belongs to the NhaA Na(+)/H(+) (TC 2.A.33) antiporter family.

Its subcellular location is the cell inner membrane. The catalysed reaction is Na(+)(in) + 2 H(+)(out) = Na(+)(out) + 2 H(+)(in). In terms of biological role, na(+)/H(+) antiporter that extrudes sodium in exchange for external protons. In Pelagibacter ubique (strain HTCC1062), this protein is Na(+)/H(+) antiporter NhaA.